Consider the following 273-residue polypeptide: Undecaprenyl-diphosphatase (273 aa).

6 helical membrane-spanning segments follow: residues 43–63 (IGNVFEVVIQLGAILAVCWEY), 82–102 (KFVLNLLIAFLPAAIVGVLLI), 109–129 (LFNPVAVACALVVGGLVILWA), 185–205 (TEFSFFLAIPIMFAATAYDVL), 214–234 (ADLPTFGTGFLFAFLSAFVAV), and 249–269 (FAWYRIVFGLIILGSWWLGWI).

It belongs to the UppP family.

Its subcellular location is the cell inner membrane. The enzyme catalyses di-trans,octa-cis-undecaprenyl diphosphate + H2O = di-trans,octa-cis-undecaprenyl phosphate + phosphate + H(+). Its function is as follows. Catalyzes the dephosphorylation of undecaprenyl diphosphate (UPP). Confers resistance to bacitracin. The chain is Undecaprenyl-diphosphatase from Laribacter hongkongensis (strain HLHK9).